A 265-amino-acid chain; its full sequence is MTESREPHVAGSAAPRPEPANGLASGQPSSRARYSRVLLKLGGEMFGGGQVGLDPDVVAQVARQIAEVVRGGVQVAVVIGGGNFFRGAQLQQRGMERTRSDYMGMLGTVMNSLALQDFLEKEGIVTRVQTAITMGQVAEPYLPLRAVRHLEKGRVVIFGAGMGLPYFSTDTTAAQRALEIGAEVVLMAKAVDGVFSADPRQYPEAELITAISHREVIDRGLRVADATAFSLCMDNGMPILVFNLLTNGNIARAVGGEKIGTLVTT.

The disordered stretch occupies residues 1-29 (MTESREPHVAGSAAPRPEPANGLASGQPS). 40–43 (KLGG) contacts ATP. Residue Gly81 coordinates UMP. ATP is bound by residues Gly82 and Arg86. UMP contacts are provided by residues Asp101 and 162-169 (MGLPYFST). ATP-binding residues include Phe195 and Asp198.

The protein belongs to the UMP kinase family. As to quaternary structure, homohexamer.

It localises to the cytoplasm. It carries out the reaction UMP + ATP = UDP + ADP. It participates in pyrimidine metabolism; CTP biosynthesis via de novo pathway; UDP from UMP (UMPK route): step 1/1. Its activity is regulated as follows. Inhibited by UTP. Its function is as follows. Catalyzes the reversible phosphorylation of UMP to UDP. The sequence is that of Uridylate kinase from Mycolicibacterium paratuberculosis (strain ATCC BAA-968 / K-10) (Mycobacterium paratuberculosis).